A 431-amino-acid chain; its full sequence is 3-phosphoshikimate 1-carboxyvinyltransferase (431 aa).

Positions 26, 27, and 31 each coordinate 3-phosphoshikimate. Residue K26 coordinates phosphoenolpyruvate. G99 and R127 together coordinate phosphoenolpyruvate. The 3-phosphoshikimate site is built by S170, S171, Q172, S199, E314, and H343. Position 172 (Q172) interacts with phosphoenolpyruvate. E314 serves as the catalytic Proton acceptor. Phosphoenolpyruvate contacts are provided by R347, R388, and K413.

The protein belongs to the EPSP synthase family. In terms of assembly, monomer.

It localises to the cytoplasm. It catalyses the reaction 3-phosphoshikimate + phosphoenolpyruvate = 5-O-(1-carboxyvinyl)-3-phosphoshikimate + phosphate. The protein operates within metabolic intermediate biosynthesis; chorismate biosynthesis; chorismate from D-erythrose 4-phosphate and phosphoenolpyruvate: step 6/7. Functionally, catalyzes the transfer of the enolpyruvyl moiety of phosphoenolpyruvate (PEP) to the 5-hydroxyl of shikimate-3-phosphate (S3P) to produce enolpyruvyl shikimate-3-phosphate and inorganic phosphate. In Mycobacterium ulcerans (strain Agy99), this protein is 3-phosphoshikimate 1-carboxyvinyltransferase.